A 661-amino-acid polypeptide reads, in one-letter code: Zeaxanthin epoxidase, chloroplastic (661 aa).

A chloroplast-targeting transit peptide spans 1–59 (MLLFRATLLPSPPFFHKTYFSHLSPVIFSDDPLPVSLQRNRVSGCRKQKWRQIRTLALQ). FAD contacts are provided by residues 81–109 (RILI…LVFE) and 359–372 (IFTW…LLGD). Residues 555-609 (HIIGSISHDDSEGISIHLPFPQVHKTHARIACKDNIFYLTDLQSQYGTWITDNEG) enclose the FHA domain.

FAD serves as cofactor. In terms of tissue distribution, expressed in flower buds, lips and leaves. Detected in roots.

The protein localises to the plastid. It is found in the chloroplast. It catalyses the reaction all-trans-zeaxanthin + 4 reduced [2Fe-2S]-[ferredoxin] + 2 O2 + 4 H(+) = all-trans-violaxanthin + 4 oxidized [2Fe-2S]-[ferredoxin] + 2 H2O. It participates in plant hormone biosynthesis; abscisate biosynthesis. Its function is as follows. Zeaxanthin epoxidase that plays an important role in the xanthophyll cycle and abscisic acid (ABA) biosynthesis. Converts zeaxanthin into antheraxanthin and subsequently violaxanthin. The chain is Zeaxanthin epoxidase, chloroplastic (ZEP) from Oncidium hybrid cultivar (Orchid).